Reading from the N-terminus, the 797-residue chain is Probable exo-1,4-beta-xylosidase xlnD (797 aa).

Positions 1-20 (MPGAASIVAVLAALLPTALG) are cleaved as a signal peptide. N-linked (GlcNAc...) asparagine glycosylation is found at Asn-23, Asn-87, Asn-142, and Asn-237. Asp-310 is a catalytic residue. Asn-326, Asn-391, Asn-404, Asn-442, Asn-479, Asn-521, Asn-617, Asn-644, Asn-657, Asn-684, and Asn-706 each carry an N-linked (GlcNAc...) asparagine glycan.

The protein belongs to the glycosyl hydrolase 3 family.

It localises to the secreted. It carries out the reaction Hydrolysis of (1-&gt;4)-beta-D-xylans, to remove successive D-xylose residues from the non-reducing termini.. It participates in glycan degradation; xylan degradation. In terms of biological role, xylan 1,4-beta-xylosidase involved in the hydrolysis of xylan, a major structural heterogeneous polysaccharide found in plant biomass representing the second most abundant polysaccharide in the biosphere, after cellulose. This chain is Probable exo-1,4-beta-xylosidase xlnD (xlnD), found in Aspergillus flavus (strain ATCC 200026 / FGSC A1120 / IAM 13836 / NRRL 3357 / JCM 12722 / SRRC 167).